Consider the following 82-residue polypeptide: Putative defensin-like protein 70 (82 aa).

A signal peptide spans 1 to 27; sequence MKMESSKMLVVFTLMVLIAVSSDLVSG. 4 cysteine pairs are disulfide-bonded: Cys39/Cys80, Cys43/Cys66, Cys52/Cys78, and Cys56/Cys79.

This sequence belongs to the DEFL family.

It localises to the secreted. In Arabidopsis thaliana (Mouse-ear cress), this protein is Putative defensin-like protein 70 (LCR83).